A 486-amino-acid polypeptide reads, in one-letter code: Cardiolipin synthase A (486 aa).

A run of 2 helical transmembrane segments spans residues 3-23 and 38-58; these read TVYT…IAGV and MAWL…YLAV. PLD phosphodiesterase domains follow at residues 219–246 and 399–426; these read MDLR…VDPR and EGGL…DMRS. Residues His224, Lys226, Asp231, His404, Lys406, and Asp411 contribute to the active site.

It belongs to the phospholipase D family. Cardiolipin synthase subfamily. ClsA sub-subfamily.

It localises to the cell inner membrane. It catalyses the reaction 2 a 1,2-diacyl-sn-glycero-3-phospho-(1'-sn-glycerol) = a cardiolipin + glycerol. In terms of biological role, catalyzes the reversible phosphatidyl group transfer from one phosphatidylglycerol molecule to another to form cardiolipin (CL) (diphosphatidylglycerol) and glycerol. The protein is Cardiolipin synthase A of Escherichia coli O157:H7 (strain EC4115 / EHEC).